The primary structure comprises 188 residues: Pterocarpan synthase 1 (188 aa).

The N-terminal stretch at 1-23 is a signal peptide; that stretch reads MAKSTTFFISLTLPFLLLSVVTA. Asn-127 is a glycosylation site (N-linked (GlcNAc...) asparagine).

It belongs to the plant dirigent protein family. Homodimer.

It is found in the secreted. The protein resides in the extracellular space. The protein localises to the apoplast. The enzyme catalyses a (4R)-4,2'-dihydroxyisoflavan = a pterocarpan + H2O.. It catalyses the reaction (3R,4R)-7,2'-dihydroxy-4'-methoxyisoflavanol = (-)-medicarpin + H2O. It carries out the reaction (3S,4R)-7,2'-dihydroxy-4'-methoxyisoflavanol = (+)-medicarpin + H2O. The catalysed reaction is (3R,4R)-3-(6-hydroxy-1,3-benzodioxol-5-yl)-3,4-dihydro-2H-chromene-4,7-diol = (-)-maackiain + H2O. The enzyme catalyses (3R,4R)-7,2',4'-trihydroxyisoflavanol = (6aR,11aR)-3,9-dihydroxypterocarpan + H2O. Functionally, involved in pterocarpan phytoalexin biosynthesis. Catalyzes the last step in the biosynthesis of the phytoalexin medicarpin, and thereby contributes to plant defense reactions. Dirigent proteins impart stereoselectivity on the phenoxy radical-coupling reaction, yielding optically active lignans from two molecules of coniferyl alcohol in the biosynthesis of lignans, flavonolignans, and alkaloids and thus plays a central role in plant secondary metabolism. This chain is Pterocarpan synthase 1, found in Glycyrrhiza echinata (Licorice).